The following is a 525-amino-acid chain: Putative ankyrin repeat protein FPV228 (525 aa).

ANK repeat units follow at residues His-39–Ile-71, Leu-72–Asn-122, Leu-123–Ile-152, Tyr-156–Ile-185, Tyr-190–Arg-226, Leu-227–Ala-254, Asn-258–Met-287, Arg-291–Ile-320, and Ile-324–His-353.

In Fowlpox virus (strain NVSL) (FPV), this protein is Putative ankyrin repeat protein FPV228.